We begin with the raw amino-acid sequence, 395 residues long: Tyrosine--tRNA ligase 2 (395 aa).

The 'HIGH' region signature appears at 42 to 51; the sequence is PTAPDIHLGH. The short motif at 226-230 is the 'KMSKS' region element; it reads KMSKS. Lysine 229 contributes to the ATP binding site. Positions 334 to 394 constitute an S4 RNA-binding domain; it reads IAISNLLKEA…GKRKFARVTI (61 aa).

The protein belongs to the class-I aminoacyl-tRNA synthetase family. TyrS type 2 subfamily. As to quaternary structure, homodimer.

Its subcellular location is the cytoplasm. It carries out the reaction tRNA(Tyr) + L-tyrosine + ATP = L-tyrosyl-tRNA(Tyr) + AMP + diphosphate + H(+). Functionally, catalyzes the attachment of tyrosine to tRNA(Tyr) in a two-step reaction: tyrosine is first activated by ATP to form Tyr-AMP and then transferred to the acceptor end of tRNA(Tyr). This is Tyrosine--tRNA ligase 2 from Vibrio cholerae serotype O1 (strain ATCC 39315 / El Tor Inaba N16961).